Here is a 426-residue protein sequence, read N- to C-terminus: tRNA(Ile)-lysidine synthase (426 aa).

27–32 contributes to the ATP binding site; sequence SGGADS.

This sequence belongs to the tRNA(Ile)-lysidine synthase family.

It localises to the cytoplasm. The enzyme catalyses cytidine(34) in tRNA(Ile2) + L-lysine + ATP = lysidine(34) in tRNA(Ile2) + AMP + diphosphate + H(+). Functionally, ligates lysine onto the cytidine present at position 34 of the AUA codon-specific tRNA(Ile) that contains the anticodon CAU, in an ATP-dependent manner. Cytidine is converted to lysidine, thus changing the amino acid specificity of the tRNA from methionine to isoleucine. This chain is tRNA(Ile)-lysidine synthase, found in Bacteroides thetaiotaomicron (strain ATCC 29148 / DSM 2079 / JCM 5827 / CCUG 10774 / NCTC 10582 / VPI-5482 / E50).